We begin with the raw amino-acid sequence, 145 residues long: UPF0201 protein LS215_1276 (145 aa).

It belongs to the UPF0201 family.

This Saccharolobus islandicus (strain L.S.2.15 / Lassen #1) (Sulfolobus islandicus) protein is UPF0201 protein LS215_1276.